Here is a 276-residue protein sequence, read N- to C-terminus: Large ribosomal subunit protein uL2 (276 aa).

Residues 219–268 (TVRGSVMNPNDHPHGGGEGRQPVGRKSPMTPWGKPALGLKTRNKKAKSSK) are disordered.

The protein belongs to the universal ribosomal protein uL2 family. In terms of assembly, part of the 50S ribosomal subunit. Forms a bridge to the 30S subunit in the 70S ribosome.

In terms of biological role, one of the primary rRNA binding proteins. Required for association of the 30S and 50S subunits to form the 70S ribosome, for tRNA binding and peptide bond formation. It has been suggested to have peptidyltransferase activity; this is somewhat controversial. Makes several contacts with the 16S rRNA in the 70S ribosome. This Lactococcus lactis subsp. lactis (strain IL1403) (Streptococcus lactis) protein is Large ribosomal subunit protein uL2.